The primary structure comprises 485 residues: Subtilisin-like protease 1 (485 aa).

Residues 1–19 form the signal peptide; sequence MGIFRFISISLAAVSAANA. A propeptide spanning residues 20-116 is cleaved from the precursor; it reads GHILSMGHAK…VEPDTTITIH (97 aa). In terms of domain architecture, Inhibitor I9 spans 34–116; the sequence is SYIVVMKDGT…VEPDTTITIH (83 aa). In terms of domain architecture, Peptidase S8 spans 126–400; sequence SWGLARISSQ…NILINNGDAK (275 aa). Active-site charge relay system residues include aspartate 158 and histidine 190. Asparagine 251 carries N-linked (GlcNAc...) asparagine glycosylation. The Charge relay system role is filled by serine 345. The segment covering 377–394 has biased composition (polar residues); that stretch reads GTSSVTNPGPGTRTNILI. Residues 377–462 form a disordered region; the sequence is GTSSVTNPGP…HTPFPNDDFN (86 aa). A compositionally biased stretch (pro residues) spans 409–418; it reads PSQPPKPSQP. The segment covering 419-428 has biased composition (low complexity); sequence SKPQQPSEPQ. Residues 433 to 455 are compositionally biased toward pro residues; the sequence is PQEPAPGQPAPAPAPVPQHPHTP.

Belongs to the peptidase S8 family.

The protein localises to the secreted. In terms of biological role, secreted subtilisin-like serine protease with keratinolytic activity that contributes to pathogenicity. This Arthroderma otae (Microsporum canis) protein is Subtilisin-like protease 1 (SUB1).